The following is a 152-amino-acid chain: Large-conductance mechanosensitive channel (152 aa).

A run of 3 helical transmembrane segments spans residues 21–41 (IDLAVGVIIGAAFGKIVDSLV), 44–64 (VVMPLVNFILGGSVDFSNKFL), and 92–112 (GNFITIIINFVLLAFVIFWMV).

It belongs to the MscL family. As to quaternary structure, homopentamer.

It is found in the cell inner membrane. Its function is as follows. Channel that opens in response to stretch forces in the membrane lipid bilayer. May participate in the regulation of osmotic pressure changes within the cell. This Bordetella bronchiseptica (strain ATCC BAA-588 / NCTC 13252 / RB50) (Alcaligenes bronchisepticus) protein is Large-conductance mechanosensitive channel.